The sequence spans 237 residues: MNLVAPTPWGLFFQDSATPQMEGIEELHNNIMFYLTIILFSVTWMMITIIKSFVNTKSPISHKYMNHGTLIELIWTITPAVILILIAFPSFKLLYLMDEVMDPSLVIYGEGHQWYWSYQYPDFTNADGEFVEFDSYIVPESDLEEGTLRMLEVDNRVIIPELTHTRFVISAADVIHSFACPSLGIKCDAYPGRLNQSSVYLNRQGTYFGQCSEICGILHSSMPIVIQSVSLKNFYYD.

Residues 1-30 lie on the Mitochondrial intermembrane side of the membrane; that stretch reads MNLVAPTPWGLFFQDSATPQMEGIEELHNN. Residues 31-51 traverse the membrane as a helical segment; sequence IMFYLTIILFSVTWMMITIIK. Residues 52–67 are Mitochondrial matrix-facing; that stretch reads SFVNTKSPISHKYMNH. The chain crosses the membrane as a helical span at residues 68–94; it reads GTLIELIWTITPAVILILIAFPSFKLL. Topologically, residues 95–237 are mitochondrial intermembrane; sequence YLMDEVMDPS…SVSLKNFYYD (143 aa). Positions 176, 211, 213, 215, 219, and 222 each coordinate Cu cation. Glu213 provides a ligand contact to Mg(2+).

The protein belongs to the cytochrome c oxidase subunit 2 family. In terms of assembly, component of the cytochrome c oxidase (complex IV, CIV), a multisubunit enzyme composed of a catalytic core of 3 subunits and several supernumerary subunits. The complex exists as a monomer or a dimer and forms supercomplexes (SCs) in the inner mitochondrial membrane with ubiquinol-cytochrome c oxidoreductase (cytochrome b-c1 complex, complex III, CIII). It depends on Cu cation as a cofactor.

It localises to the mitochondrion inner membrane. The catalysed reaction is 4 Fe(II)-[cytochrome c] + O2 + 8 H(+)(in) = 4 Fe(III)-[cytochrome c] + 2 H2O + 4 H(+)(out). Component of the cytochrome c oxidase, the last enzyme in the mitochondrial electron transport chain which drives oxidative phosphorylation. The respiratory chain contains 3 multisubunit complexes succinate dehydrogenase (complex II, CII), ubiquinol-cytochrome c oxidoreductase (cytochrome b-c1 complex, complex III, CIII) and cytochrome c oxidase (complex IV, CIV), that cooperate to transfer electrons derived from NADH and succinate to molecular oxygen, creating an electrochemical gradient over the inner membrane that drives transmembrane transport and the ATP synthase. Cytochrome c oxidase is the component of the respiratory chain that catalyzes the reduction of oxygen to water. Electrons originating from reduced cytochrome c in the intermembrane space (IMS) are transferred via the dinuclear copper A center (CU(A)) of subunit 2 and heme A of subunit 1 to the active site in subunit 1, a binuclear center (BNC) formed by heme A3 and copper B (CU(B)). The BNC reduces molecular oxygen to 2 water molecules using 4 electrons from cytochrome c in the IMS and 4 protons from the mitochondrial matrix. The polypeptide is Cytochrome c oxidase subunit 2 (COX2) (Trichophyton rubrum (Athlete's foot fungus)).